A 400-amino-acid chain; its full sequence is 1-deoxy-D-xylulose 5-phosphate reductoisomerase (400 aa).

NADPH is bound by residues Thr-10, Gly-11, Ser-12, Ile-13, Gly-36, Asn-38, and Asn-124. Residue Lys-125 participates in 1-deoxy-D-xylulose 5-phosphate binding. Glu-126 lines the NADPH pocket. Asp-150 lines the Mn(2+) pocket. 1-deoxy-D-xylulose 5-phosphate contacts are provided by Ser-151, Glu-152, Ser-186, and His-209. Residue Glu-152 participates in Mn(2+) binding. Gly-215 serves as a coordination point for NADPH. Residues Ser-222, Asn-227, Lys-228, and Glu-231 each contribute to the 1-deoxy-D-xylulose 5-phosphate site. Glu-231 contributes to the Mn(2+) binding site.

The protein belongs to the DXR family. The cofactor is Mg(2+). It depends on Mn(2+) as a cofactor.

It carries out the reaction 2-C-methyl-D-erythritol 4-phosphate + NADP(+) = 1-deoxy-D-xylulose 5-phosphate + NADPH + H(+). The protein operates within isoprenoid biosynthesis; isopentenyl diphosphate biosynthesis via DXP pathway; isopentenyl diphosphate from 1-deoxy-D-xylulose 5-phosphate: step 1/6. Functionally, catalyzes the NADPH-dependent rearrangement and reduction of 1-deoxy-D-xylulose-5-phosphate (DXP) to 2-C-methyl-D-erythritol 4-phosphate (MEP). The protein is 1-deoxy-D-xylulose 5-phosphate reductoisomerase of Aliivibrio fischeri (strain ATCC 700601 / ES114) (Vibrio fischeri).